The chain runs to 676 residues: Capsid vertex component 1 (676 aa).

Low complexity predominate over residues 253–264 (HPVRPSSSRVAS). Residues 253–308 (HPVRPSSSRVASGLLQSAKGHGAQTSNTDPINNGSFDGVLEPPGQGRFTGKKNNSS) form a disordered region. The span at 275-287 (AQTSNTDPINNGS) shows a compositional bias: polar residues.

Belongs to the herpesviridae CVC1 protein family. In terms of assembly, interacts (via C-terminus) with capsid vertex component 2/CVC2.

The protein localises to the virion. Its subcellular location is the host nucleus. Functionally, capsid vertex-specific component that plays a role during viral DNA encapsidation, assuring correct genome cleavage and presumably stabilizing capsids that contain full-length viral genomes. This chain is Capsid vertex component 1, found in Varicella-zoster virus (strain Dumas) (HHV-3).